The sequence spans 272 residues: 4-diphosphocytidyl-2-C-methyl-D-erythritol kinase (272 aa).

Lysine 14 is an active-site residue. 92–102 (PMGGGLGGGSS) contributes to the ATP binding site. Aspartate 132 is a catalytic residue.

The protein belongs to the GHMP kinase family. IspE subfamily.

It catalyses the reaction 4-CDP-2-C-methyl-D-erythritol + ATP = 4-CDP-2-C-methyl-D-erythritol 2-phosphate + ADP + H(+). Its pathway is isoprenoid biosynthesis; isopentenyl diphosphate biosynthesis via DXP pathway; isopentenyl diphosphate from 1-deoxy-D-xylulose 5-phosphate: step 3/6. Its function is as follows. Catalyzes the phosphorylation of the position 2 hydroxy group of 4-diphosphocytidyl-2C-methyl-D-erythritol. In Fervidobacterium nodosum (strain ATCC 35602 / DSM 5306 / Rt17-B1), this protein is 4-diphosphocytidyl-2-C-methyl-D-erythritol kinase.